The chain runs to 609 residues: Glutamine--fructose-6-phosphate aminotransferase [isomerizing] (609 aa).

The active-site Nucleophile; for GATase activity is Cys2. The Glutamine amidotransferase type-2 domain occupies 2-218; sequence CGIVGAIAQR…EGDIAEITRR (217 aa). 2 consecutive SIS domains span residues 286–426 and 458–599; these read ADDL…LKGL and LAED…VDQP. Catalysis depends on Lys604, which acts as the For Fru-6P isomerization activity.

As to quaternary structure, homodimer.

Its subcellular location is the cytoplasm. The enzyme catalyses D-fructose 6-phosphate + L-glutamine = D-glucosamine 6-phosphate + L-glutamate. Its function is as follows. Catalyzes the first step in hexosamine metabolism, converting fructose-6P into glucosamine-6P using glutamine as a nitrogen source. In Salmonella typhi, this protein is Glutamine--fructose-6-phosphate aminotransferase [isomerizing].